The following is a 668-amino-acid chain: UvrABC system protein B (668 aa).

Positions 31–416 (QGITDGVPAQ…RGHIIEQIIR (386 aa)) constitute a Helicase ATP-binding domain. 44–51 (GTTGSGKT) lines the ATP pocket. The Beta-hairpin motif lies at 97-120 (YYDYYQPEAYIARSDTYIEKSLLI). Positions 433 to 596 (QIDDLLEEIR…ITPQPIIKPI (164 aa)) constitute a Helicase C-terminal domain. A UVR domain is found at 621–656 (EASIKTYEEAMYQAAQEFQFDEAAKYRDLMNAAKKQ).

The protein belongs to the UvrB family. As to quaternary structure, forms a heterotetramer with UvrA during the search for lesions. Interacts with UvrC in an incision complex.

The protein localises to the cytoplasm. Its function is as follows. The UvrABC repair system catalyzes the recognition and processing of DNA lesions. A damage recognition complex composed of 2 UvrA and 2 UvrB subunits scans DNA for abnormalities. Upon binding of the UvrA(2)B(2) complex to a putative damaged site, the DNA wraps around one UvrB monomer. DNA wrap is dependent on ATP binding by UvrB and probably causes local melting of the DNA helix, facilitating insertion of UvrB beta-hairpin between the DNA strands. Then UvrB probes one DNA strand for the presence of a lesion. If a lesion is found the UvrA subunits dissociate and the UvrB-DNA preincision complex is formed. This complex is subsequently bound by UvrC and the second UvrB is released. If no lesion is found, the DNA wraps around the other UvrB subunit that will check the other stand for damage. This Chlamydia trachomatis serovar D (strain ATCC VR-885 / DSM 19411 / UW-3/Cx) protein is UvrABC system protein B.